Consider the following 309-residue polypeptide: 2-dehydro-3-deoxygluconokinase (309 aa).

Residues 28–32, Tyr-88, 102–104, and Arg-170 contribute to the substrate site; these read GDTLN and YWR. ATP-binding positions include 168-170, 228-233, and 261-264; these read NYR, KRGADS, and AAGD. Substrate is bound at residue Asp-264. Asp-264 acts as the Proton acceptor in catalysis.

Belongs to the carbohydrate kinase pfkB family.

It carries out the reaction 2-dehydro-3-deoxy-D-gluconate + ATP = 2-dehydro-3-deoxy-6-phospho-D-gluconate + ADP + H(+). It functions in the pathway carbohydrate acid metabolism; 2-dehydro-3-deoxy-D-gluconate degradation; D-glyceraldehyde 3-phosphate and pyruvate from 2-dehydro-3-deoxy-D-gluconate: step 1/2. Its function is as follows. Catalyzes the phosphorylation of 2-keto-3-deoxygluconate (KDG) to produce 2-keto-3-deoxy-6-phosphogluconate (KDPG). In Escherichia coli (strain ATCC 9637 / CCM 2024 / DSM 1116 / LMG 11080 / NBRC 13500 / NCIMB 8666 / NRRL B-766 / W), this protein is 2-dehydro-3-deoxygluconokinase (kdgK).